Here is a 150-residue protein sequence, read N- to C-terminus: Allograft inflammatory factor 1-like (150 aa).

An N-acetylserine modification is found at S2. S2 is modified (phosphoserine). The 36-residue stretch at 47–82 (EKLTAFKEKYMEFDLNNEGEIDLMSLKRMMEKLGVP) folds into the EF-hand 1 domain. D60, N62, E64, and E66 together coordinate Ca(2+). In terms of domain architecture, EF-hand 2; degenerate spans 83–117 (KTHLEMKKMISEVTGGVSDTISYRDFVNMMLGKRS). Positions 129 to 150 (KANESSPKPVGPPPERDIASLP) are disordered. Residue S134 is modified to Phosphoserine.

In terms of assembly, homodimer (Potential). Monomer.

It is found in the cytoplasm. The protein resides in the cytoskeleton. The protein localises to the cell projection. Its subcellular location is the ruffle membrane. Its function is as follows. Actin-binding protein that promotes actin bundling. May neither bind calcium nor depend on calcium for function. The sequence is that of Allograft inflammatory factor 1-like (AIF1L) from Homo sapiens (Human).